Consider the following 544-residue polypeptide: Probable protein kinase UbiB (544 aa).

The region spanning 123–501 is the Protein kinase domain; sequence DFDIKPLASA…KRQQAKGQFL (379 aa). ATP-binding positions include 129–137 and lysine 152; that span reads LASASIAQV. Aspartate 287 acts as the Proton acceptor in catalysis. Residues 515–537 form a helical membrane-spanning segment; sequence LLTSNITVLASISAATGAAFWLF.

Belongs to the ABC1 family. UbiB subfamily.

The protein resides in the cell inner membrane. The protein operates within cofactor biosynthesis; ubiquinone biosynthesis [regulation]. In terms of biological role, is probably a protein kinase regulator of UbiI activity which is involved in aerobic coenzyme Q (ubiquinone) biosynthesis. The sequence is that of Probable protein kinase UbiB from Aliivibrio fischeri (strain ATCC 700601 / ES114) (Vibrio fischeri).